The sequence spans 209 residues: Ribosomal RNA large subunit methyltransferase E (209 aa).

S-adenosyl-L-methionine-binding residues include Gly-63, Trp-65, Asp-83, Asp-99, and Asp-124. Lys-164 (proton acceptor) is an active-site residue.

Belongs to the class I-like SAM-binding methyltransferase superfamily. RNA methyltransferase RlmE family.

It localises to the cytoplasm. The catalysed reaction is uridine(2552) in 23S rRNA + S-adenosyl-L-methionine = 2'-O-methyluridine(2552) in 23S rRNA + S-adenosyl-L-homocysteine + H(+). Specifically methylates the uridine in position 2552 of 23S rRNA at the 2'-O position of the ribose in the fully assembled 50S ribosomal subunit. The chain is Ribosomal RNA large subunit methyltransferase E from Buchnera aphidicola subsp. Cinara cedri (strain Cc).